The chain runs to 237 residues: Concanavalin-A (237 aa).

Glutamate 8 and aspartate 10 together coordinate Mn(2+). 4 residues coordinate Ca(2+): aspartate 10, tyrosine 12, asparagine 14, and aspartate 19. Residue asparagine 14 participates in a carbohydrate binding. Residues aspartate 19 and histidine 24 each contribute to the Mn(2+) site. A carbohydrate-binding positions include glycine 98–tyrosine 100, aspartate 208, and arginine 228.

This sequence belongs to the leguminous lectin family. Homotetramer. In terms of processing, concanavalin A-like lectins of the Diocleinae subtribe undergo proteolytic processing referred to as circular permutation. The propeptide is split into an N-terminal and a C-terminal part, the gamma and beta chain, respectively. These are then religated in beta-gamma order to form the mature alpha chain. The beta and gamma chains can often be detected in cell extracts. Residues 1-118 of the mature chain, as displayed here, probably constitute the beta chain in the propeptide, residues 119-237 the gamma chain.

Its function is as follows. Glucose/D-mannose specific lectin. In Canavalia cathartica (Jackbean), this protein is Concanavalin-A.